Consider the following 175-residue polypeptide: uncharacterized protein (175 aa).

It belongs to the asfivirus B175L family.

This is an uncharacterized protein from Ornithodoros (relapsing fever ticks).